Reading from the N-terminus, the 181-residue chain is 30 kDa heat shock protein (181 aa).

The region spanning 33–181 (ASVQSFAPRF…PPTAKKITIQ (149 aa)) is the sHSP domain. Positions 79-115 (GRSEREYHSSSDDNKNDQADTENQARGESSEVAKTGE) are enriched in basic and acidic residues. Positions 79–127 (GRSEREYHSSSDDNKNDQADTENQARGESSEVAKTGEKQVSTKKAANKS) are disordered.

Belongs to the small heat shock protein (HSP20) family.

This is 30 kDa heat shock protein (hsp30) from Emericella nidulans (strain FGSC A4 / ATCC 38163 / CBS 112.46 / NRRL 194 / M139) (Aspergillus nidulans).